The chain runs to 1131 residues: Phytochrome A (1131 aa).

The segment at 1–23 is disordered; that stretch reads MSSSRPAHSSSSSSRTRQSSRAR. Positions 219–404 constitute a GAF domain; it reads SMEALCNTVV…VFAVHVNKEF (186 aa). Cys324 provides a ligand contact to phytochromobilin. 2 PAS domains span residues 620–690 and 750–834; these read VTSE…LQGR and VEGD…LAGE. Residues 904 to 1124 form the Histidine kinase domain; sequence YMRHAINKPL…TFILTAELAA (221 aa).

This sequence belongs to the phytochrome family. As to quaternary structure, homodimer. Contains one covalently linked phytochromobilin chromophore.

In terms of biological role, regulatory photoreceptor which exists in two forms that are reversibly interconvertible by light: the Pr form that absorbs maximally in the red region of the spectrum and the Pfr form that absorbs maximally in the far-red region. Photoconversion of Pr to Pfr induces an array of morphogenic responses, whereas reconversion of Pfr to Pr cancels the induction of those responses. Pfr controls the expression of a number of nuclear genes including those encoding the small subunit of ribulose-bisphosphate carboxylase, chlorophyll A/B binding protein, protochlorophyllide reductase, rRNA, etc. It also controls the expression of its own gene(s) in a negative feedback fashion. This chain is Phytochrome A (PHYA1), found in Zea mays (Maize).